The chain runs to 244 residues: MKHILLITGAGKGIGRAIALEFARAARHHPDFEPVLVLSSRTAADLEKISLECRAEGALTDTITADISDMADVRRLTTHIVERYGHIDCLVNNAGVGRFGALSDLTEEDFDYTMNTNLKGTFFLTQALFALMERQHSGHIFFITSVAATKAFRHSSIYCMSKFGQRGLVETMRLYARKCNVRITDVQPGAVYTPMWGKVDDEMQALMMMPEDIAAPVVQAYLQPSRTVVEEIILRPTSGDIQDD.

NADP(+) is bound by residues 9–15, 40–42, 66–67, and Asn-93; these read GAGKGIG, SRT, and DI. Phe-99 provides a ligand contact to substrate. Residue Thr-116 participates in NADP(+) binding. Substrate is bound by residues Ser-145 and Tyr-158. NADP(+)-binding positions include Tyr-158, Lys-162, and 191–196; that span reads VYTPMW. Trp-196 serves as a coordination point for substrate.

This sequence belongs to the short-chain dehydrogenases/reductases (SDR) family. Homodimer.

The protein localises to the cytoplasm. The enzyme catalyses L-threo-7,8-dihydrobiopterin + NADP(+) = L-sepiapterin + NADPH + H(+). It carries out the reaction L-threo-tetrahydrobiopterin + 2 NADP(+) = 6-pyruvoyl-5,6,7,8-tetrahydropterin + 2 NADPH + 2 H(+). With respect to regulation, slightly inhibited by N-acetyldopamine but not by N-acetylserotonin or melatonin. In terms of biological role, catalyzes the final reductions in tetra-hydrobiopterin biosynthesis to form 5,6,7,8-tetrahydrobiopterin. This chain is Sepiapterin reductase, found in Chlorobaculum tepidum (strain ATCC 49652 / DSM 12025 / NBRC 103806 / TLS) (Chlorobium tepidum).